An 88-amino-acid chain; its full sequence is Putative septation protein SpoVG (88 aa).

The protein belongs to the SpoVG family.

In terms of biological role, could be involved in septation. In Caldicellulosiruptor saccharolyticus (strain ATCC 43494 / DSM 8903 / Tp8T 6331), this protein is Putative septation protein SpoVG.